The sequence spans 193 residues: MNFLAHLHLAHLADSSLPGNLMADFVRGNPQGDYPAEIIDGIYMHRRIDVMTDNLAEVKEAREWFRPQTRRVAPITLDVMWDHFLSQHWAQLSPDLPLDEFVRYAEQQIVPILPDSPPRFVNLNQYLWSERWLERYQEMDFIQRVLNGMASRRPRLDALRDSWQDLDTHYDQLEGQFWRFYPQMMRLAENKQL.

The protein belongs to the AcpH family.

The enzyme catalyses holo-[ACP] + H2O = apo-[ACP] + (R)-4'-phosphopantetheine + H(+). Functionally, converts holo-ACP to apo-ACP by hydrolytic cleavage of the phosphopantetheine prosthetic group from ACP. In Klebsiella pneumoniae (strain 342), this protein is Acyl carrier protein phosphodiesterase.